Here is a 100-residue protein sequence, read N- to C-terminus: UPF0235 protein TC_0667 (100 aa).

It belongs to the UPF0235 family.

The polypeptide is UPF0235 protein TC_0667 (Chlamydia muridarum (strain MoPn / Nigg)).